Reading from the N-terminus, the 108-residue chain is Small ribosomal subunit protein eS25A (108 aa).

A compositionally biased stretch (low complexity) spans 1-20; the sequence is MPPKQQLSKAAKAAAALAGG. The interval 1–30 is disordered; the sequence is MPPKQQLSKAAKAAAALAGGKKSKKKWSKK. Residue Pro-2 is modified to N,N-dimethylproline; by NTM1. A compositionally biased stretch (basic residues) spans 21 to 30; it reads KKSKKKWSKK.

Belongs to the eukaryotic ribosomal protein eS25 family. In terms of assembly, component of the small ribosomal subunit (SSU). Mature yeast ribosomes consist of a small (40S) and a large (60S) subunit. The 40S small subunit contains 1 molecule of ribosomal RNA (18S rRNA) and 33 different proteins (encoded by 57 genes). The large 60S subunit contains 3 rRNA molecules (25S, 5.8S and 5S rRNA) and 46 different proteins (encoded by 81 genes).

It is found in the cytoplasm. Component of the ribosome, a large ribonucleoprotein complex responsible for the synthesis of proteins in the cell. The small ribosomal subunit (SSU) binds messenger RNAs (mRNAs) and translates the encoded message by selecting cognate aminoacyl-transfer RNA (tRNA) molecules. The large subunit (LSU) contains the ribosomal catalytic site termed the peptidyl transferase center (PTC), which catalyzes the formation of peptide bonds, thereby polymerizing the amino acids delivered by tRNAs into a polypeptide chain. The nascent polypeptides leave the ribosome through a tunnel in the LSU and interact with protein factors that function in enzymatic processing, targeting, and the membrane insertion of nascent chains at the exit of the ribosomal tunnel. The protein is Small ribosomal subunit protein eS25A of Saccharomyces cerevisiae (strain ATCC 204508 / S288c) (Baker's yeast).